The chain runs to 185 residues: Anaphase-promoting complex subunit 10 (185 aa).

T2 is modified (N-acetylthreonine). The DOC domain occupies 2-185 (TTPNKTPPGA…IDFMMYRSIR (184 aa)). K169 is modified (N6-acetyllysine).

This sequence belongs to the APC10 family. As to quaternary structure, the mammalian APC/C is composed at least of 14 distinct subunits ANAPC1, ANAPC2, CDC27/APC3, ANAPC4, ANAPC5, CDC16/APC6, ANAPC7, CDC23/APC8, ANAPC10, ANAPC11, CDC26/APC12, ANAPC13, ANAPC15 and ANAPC16 that assemble into a complex of at least 19 chains with a combined molecular mass of around 1.2 MDa; APC/C interacts with FZR1 and FBXO5. The C-terminus of APC10 binds to CDC27/APC3. Interacts with PIWIL1; interaction only takes place when PIWIL1 binds piRNA. Interacts with FBXO43; the interaction is direct.

Its pathway is protein modification; protein ubiquitination. In terms of biological role, component of the anaphase promoting complex/cyclosome (APC/C), a cell cycle-regulated E3 ubiquitin ligase that controls progression through mitosis and the G1 phase of the cell cycle. The APC/C complex acts by mediating ubiquitination and subsequent degradation of target proteins: it mainly mediates the formation of 'Lys-11'-linked polyubiquitin chains and, to a lower extent, the formation of 'Lys-48'- and 'Lys-63'-linked polyubiquitin chains. The APC/C complex catalyzes assembly of branched 'Lys-11'-/'Lys-48'-linked branched ubiquitin chains on target proteins. This is Anaphase-promoting complex subunit 10 (ANAPC10) from Homo sapiens (Human).